Consider the following 1048-residue polypeptide: B3 domain-containing protein Os02g0598200 (1048 aa).

Residues 1–345 (MDGAVRGQGC…QKERVASSDN (345 aa)) form a disordered region. Positions 16–25 (SFNKTKKKNR) are enriched in basic residues. Composition is skewed to basic and acidic residues over residues 26–134 (NCSD…SDDM), 151–162 (KKNSRNDADEEK), 169–214 (CSDD…GDKK), 243–253 (KNMKSDGDSYK), 281–295 (AKER…MEMK), and 332–345 (LKRE…SSDN). The segment at residues 375–468 (AFAFFKFVRD…TFSVRVFGID (94 aa)) is a DNA-binding region (TF-B3 1). Positions 505-528 (QYQDSEDIHDGPNVSGESPRSKEP) are disordered. The segment at residues 953 to 1048 (LQFCIPSTIQ…LAFQVYITRK (96 aa)) is a DNA-binding region (TF-B3 2).

It is found in the nucleus. This is B3 domain-containing protein Os02g0598200 from Oryza sativa subsp. japonica (Rice).